Reading from the N-terminus, the 284-residue chain is Probable endonuclease 4 (284 aa).

Positions 66, 106, 142, 176, 179, 213, 226, 228, and 258 each coordinate Zn(2+).

This sequence belongs to the AP endonuclease 2 family. Requires Zn(2+) as cofactor.

It catalyses the reaction Endonucleolytic cleavage to 5'-phosphooligonucleotide end-products.. In terms of biological role, endonuclease IV plays a role in DNA repair. It cleaves phosphodiester bonds at apurinic or apyrimidinic (AP) sites, generating a 3'-hydroxyl group and a 5'-terminal sugar phosphate. The protein is Probable endonuclease 4 of Natranaerobius thermophilus (strain ATCC BAA-1301 / DSM 18059 / JW/NM-WN-LF).